Here is a 334-residue protein sequence, read N- to C-terminus: Formylmethanofuran--tetrahydromethanopterin formyltransferase (334 aa).

This sequence belongs to the FTR family. In terms of assembly, homotetramer.

The protein resides in the cytoplasm. The catalysed reaction is N-formylmethanofuran + 5,6,7,8-tetrahydromethanopterin + H(+) = N(5)-formyl-5,6,7,8-tetrahydromethanopterin + methanofuran. The protein operates within one-carbon metabolism; formaldehyde degradation; formate from formaldehyde (H(4)MPT route): step 4/5. In terms of biological role, catalyzes the transfer of a formyl group from 5-formyl tetrahydromethanopterin (5-formyl-H(4)MPT) to methanofuran (MFR) to produce formylmethanofuran (formyl-MFR) and tetrahydromethanopterin (H(4)MPT). The chain is Formylmethanofuran--tetrahydromethanopterin formyltransferase from Rhodopirellula baltica (strain DSM 10527 / NCIMB 13988 / SH1).